We begin with the raw amino-acid sequence, 426 residues long: 3-phosphoshikimate 1-carboxyvinyltransferase (426 aa).

The 3-phosphoshikimate site is built by lysine 22, serine 23, and arginine 27. Lysine 22 contributes to the phosphoenolpyruvate binding site. Residues glycine 96 and arginine 124 each contribute to the phosphoenolpyruvate site. 3-phosphoshikimate-binding residues include serine 170, serine 171, glutamine 172, serine 198, aspartate 314, asparagine 337, and lysine 341. Phosphoenolpyruvate is bound at residue glutamine 172. Catalysis depends on aspartate 314, which acts as the Proton acceptor. Residues arginine 345, arginine 387, and lysine 412 each contribute to the phosphoenolpyruvate site.

This sequence belongs to the EPSP synthase family. As to quaternary structure, monomer.

The protein localises to the cytoplasm. It catalyses the reaction 3-phosphoshikimate + phosphoenolpyruvate = 5-O-(1-carboxyvinyl)-3-phosphoshikimate + phosphate. It functions in the pathway metabolic intermediate biosynthesis; chorismate biosynthesis; chorismate from D-erythrose 4-phosphate and phosphoenolpyruvate: step 6/7. Its function is as follows. Catalyzes the transfer of the enolpyruvyl moiety of phosphoenolpyruvate (PEP) to the 5-hydroxyl of shikimate-3-phosphate (S3P) to produce enolpyruvyl shikimate-3-phosphate and inorganic phosphate. This chain is 3-phosphoshikimate 1-carboxyvinyltransferase, found in Shewanella sp. (strain ANA-3).